The primary structure comprises 686 residues: Methionine--tRNA ligase (686 aa).

The 'HIGH' region motif lies at 15–25 (PYANGPIHLGH). Cys-146, Cys-149, Cys-159, and Cys-162 together coordinate Zn(2+). The 'KMSKS' region motif lies at 332 to 336 (KMSKS). Lys-335 provides a ligand contact to ATP. Residues 585-686 (TFAKTDLRVA…DGAKPGQRIM (102 aa)) enclose the tRNA-binding domain.

Belongs to the class-I aminoacyl-tRNA synthetase family. MetG type 1 subfamily. As to quaternary structure, homodimer. Zn(2+) serves as cofactor.

Its subcellular location is the cytoplasm. It carries out the reaction tRNA(Met) + L-methionine + ATP = L-methionyl-tRNA(Met) + AMP + diphosphate. Its function is as follows. Is required not only for elongation of protein synthesis but also for the initiation of all mRNA translation through initiator tRNA(fMet) aminoacylation. The polypeptide is Methionine--tRNA ligase (Psychromonas ingrahamii (strain DSM 17664 / CCUG 51855 / 37)).